Here is a 479-residue protein sequence, read N- to C-terminus: Neuronal acetylcholine receptor subunit alpha-9 (479 aa).

Residues 1–22 (MNWSHSCISFCWIYFAASRLRA) form the signal peptide. At 23–238 (AETADGKYAQ…FTLLLKRRSS (216 aa)) the chain is on the extracellular side. N-linked (GlcNAc...) asparagine glycosylation occurs at Asn-57. A disulfide bridge links Cys-155 with Cys-169. Asn-170 carries N-linked (GlcNAc...) asparagine glycosylation. Ser-191 and Asp-193 together coordinate Na(+). Cys-219 and Cys-220 form a disulfide bridge. 3 helical membrane-spanning segments follow: residues 239-259 (FYIV…PLSF), 269-289 (VSLG…VAEI), and 303-323 (YIAT…VMNI). The Cytoplasmic segment spans residues 324–457 (HFCGAEARPV…WKKVAKVIDR (134 aa)). A helical transmembrane segment spans residues 458-478 (FFMWIFFIMVFVMTILIIARA).

Belongs to the ligand-gated ion channel (TC 1.A.9) family. Acetylcholine receptor (TC 1.A.9.1) subfamily. Alpha-9/CHRNA9 sub-subfamily. In terms of assembly, forms homo- or heteropentameric channels in conjunction with CHRNA10. The native outer hair cell receptor is composed of CHRNA9:CHRNA10 heterooligomers. Found in the stoichiometric form (CHRNA9)2:(CHRNA10)3. In terms of processing, N-glycosylated. In terms of tissue distribution, expressed in cochlea, keratinocytes, pituitary gland, B-cells and T-cells.

The protein localises to the synaptic cell membrane. It localises to the cell membrane. The enzyme catalyses Ca(2+)(in) = Ca(2+)(out). The catalysed reaction is K(+)(in) = K(+)(out). It catalyses the reaction Na(+)(in) = Na(+)(out). It carries out the reaction Mg(2+)(in) = Mg(2+)(out). Its activity is regulated as follows. Activated by a myriad of ligands such as acetylcholine. AChR activity is inhibited by the antagonist alpha-conotoxins RgIA and GeXXA, small disulfide-constrained peptides from cone snails. Functionally, component of neuronal acetylcholine receptors (nAChRs) that function as pentameric, ligand-gated cation channels with high calcium permeability among other activities. nAChRs are excitatory neurotrasnmitter receptors formed by a collection of nAChR subunits known to mediate synaptic transmission in the nervous system and the neuromuscular junction. Each nAchR subunit confers differential attributes to channel properties, including activation, deactivation and desensitization kinetics, pH sensitivity, cation permeability, and binding to allosteric modulators. Forms either homopentamers or heteropentamers with CHRNA10. Expressed in the inner ear, in sympathetic neurons and in other non-neuronal cells, such as skin keratinocytes and lymphocytes. nAChR formed by CHRNA9:CHRNA10 mediate central nervous system control of auditory and vestibular sensory processing. The channel is permeable to a range of divalent cations including calcium, the influx of which may activate a potassium current which hyperpolarizes the cell membrane. In the ear, mediates synaptic transmission between efferent olivocochlear fibers and hair cells of the cochlea, this may lead to a reduction in basilar membrane motion, altering the activity of auditory nerve fibers and reducing the range of dynamic hearing. This may protect against acoustic trauma. May also regulate keratinocyte adhesion. This is Neuronal acetylcholine receptor subunit alpha-9 from Homo sapiens (Human).